Consider the following 271-residue polypeptide: Ribosomal RNA small subunit methyltransferase A (271 aa).

His-11, Leu-13, Gly-38, Glu-58, Asp-86, and Asn-101 together coordinate S-adenosyl-L-methionine.

The protein belongs to the class I-like SAM-binding methyltransferase superfamily. rRNA adenine N(6)-methyltransferase family. RsmA subfamily.

The protein localises to the cytoplasm. It carries out the reaction adenosine(1518)/adenosine(1519) in 16S rRNA + 4 S-adenosyl-L-methionine = N(6)-dimethyladenosine(1518)/N(6)-dimethyladenosine(1519) in 16S rRNA + 4 S-adenosyl-L-homocysteine + 4 H(+). Specifically dimethylates two adjacent adenosines (A1518 and A1519) in the loop of a conserved hairpin near the 3'-end of 16S rRNA in the 30S particle. May play a critical role in biogenesis of 30S subunits. The sequence is that of Ribosomal RNA small subunit methyltransferase A from Helicobacter pylori (strain Shi470).